The sequence spans 207 residues: Mediator of RNA polymerase II transcription subunit 21 (207 aa).

The disordered stretch occupies residues 37–121; that stretch reads PHPDVPDAAP…PDSPRTFASR (85 aa). The segment covering 65–80 has biased composition (low complexity); that stretch reads PVPAQSQASPPAQNPA. A compositionally biased stretch (gly residues) spans 84-96; sequence AGAGTSVGEGGQT. A compositionally biased stretch (low complexity) spans 97-108; the sequence is PGPAAGAGADPN. Positions 146–196 form a coiled coil; it reads IDSSEAEQEKRIRELEGELRRVEEERELKMRELKRLRRTLENVLRAVETGL.

Belongs to the Mediator complex subunit 21 family. In terms of assembly, component of the Mediator complex.

Its subcellular location is the nucleus. In terms of biological role, component of the Mediator complex, a coactivator involved in the regulated transcription of nearly all RNA polymerase II-dependent genes. Mediator functions as a bridge to convey information from gene-specific regulatory proteins to the basal RNA polymerase II transcription machinery. Mediator is recruited to promoters by direct interactions with regulatory proteins and serves as a scaffold for the assembly of a functional preinitiation complex with RNA polymerase II and the general transcription factors. This is Mediator of RNA polymerase II transcription subunit 21 (srb7) from Neosartorya fischeri (strain ATCC 1020 / DSM 3700 / CBS 544.65 / FGSC A1164 / JCM 1740 / NRRL 181 / WB 181) (Aspergillus fischerianus).